Here is a 53-residue protein sequence, read N- to C-terminus: MGRQAEFWSESKNNSKIDGQPKAKARFASKRPNGTINTHPQERMRAANQQEEE.

A disordered region spans residues 1 to 53 (MGRQAEFWSESKNNSKIDGQPKAKARFASKRPNGTINTHPQERMRAANQQEEE).

The protein belongs to the SspK family.

The protein localises to the spore core. The chain is Small, acid-soluble spore protein K from Bacillus cytotoxicus (strain DSM 22905 / CIP 110041 / 391-98 / NVH 391-98).